The sequence spans 558 residues: MSFKTDAEIAQSSTMRPIGEIAAKLGLNVDNIEPYGHYKAKINPAEAFKLPQKQGRLILVTAINPTPAGEGKTTVTIGLADALRHIGKDSVIALREPSLGPVFGVKGGAAGGGYAQVLPMEDINLHFTGDFHAIGAANNLLAAMLDNHIYQGNELNIDPKRVLWRRVVDMNDRQLRNIIDGMGKPVDGVMRPDGFDITVASEVMAVFCLAKDISDLKERLGNILVAYAKDGSPVYAKDLKANGAMAALLKDAIKPNLVQTIEGTPAFVHGGPFANIAHGCNSVTATRLAKHLADYAVTEAGFGADLGAEKFCDIKCRLAGLKPDAAVVVATVRALKYNGGVERANLGEENLDALEKGLPNLLKHISNLKNVFGLPVVVALNRFVSDSDAELAMIEKACAEHGVEVSLTEVWGKGGAGGADLARKVVNAIESQTNNFGFAYDVELGIKDKIRAIAQKVYGAEDVDFSAEASAEIASLEKLGLDKMPICMAKTQYSLSDNAKLLGCPEDFRIAVRGITVSAGAGFIVALCGNMMKMPGLPKVPAAEKIDVDAEGVIHGLF.

Thr-66–Thr-73 is a binding site for ATP.

It belongs to the formate--tetrahydrofolate ligase family.

The enzyme catalyses (6S)-5,6,7,8-tetrahydrofolate + formate + ATP = (6R)-10-formyltetrahydrofolate + ADP + phosphate. It functions in the pathway one-carbon metabolism; tetrahydrofolate interconversion. This is Formate--tetrahydrofolate ligase from Neisseria meningitidis serogroup A / serotype 4A (strain DSM 15465 / Z2491).